The following is a 644-amino-acid chain: Chaperone protein DnaK (644 aa).

T199 carries the post-translational modification Phosphothreonine; by autocatalysis. The tract at residues 602-644 (IYAKKSSEGQTAQGQTQSQESTKPAEEGVVDAEFEEVKEEDKK) is disordered. Residues 609 to 623 (EGQTAQGQTQSQEST) show a composition bias toward polar residues. Residues 629–644 (GVVDAEFEEVKEEDKK) are compositionally biased toward acidic residues.

Belongs to the heat shock protein 70 family.

Its function is as follows. Acts as a chaperone. This Legionella pneumophila (strain Lens) protein is Chaperone protein DnaK.